The following is a 973-amino-acid chain: UvrABC system protein A (973 aa).

ATP is bound at residue 34 to 41; that stretch reads GLSGSGKS. ABC transporter domains follow at residues 331–609 and 629–958; these read WAKS…PKSL and PKKG…HFLK. ATP is bound at residue 662–669; the sequence is GVSGGGKS. A C4-type zinc finger spans residues 761–787; it reads CEACQGDGVIKIEMHFLPDVYVTCDVC.

It belongs to the ABC transporter superfamily. UvrA family. As to quaternary structure, forms a heterotetramer with UvrB during the search for lesions.

Its subcellular location is the cytoplasm. In terms of biological role, the UvrABC repair system catalyzes the recognition and processing of DNA lesions. UvrA is an ATPase and a DNA-binding protein. A damage recognition complex composed of 2 UvrA and 2 UvrB subunits scans DNA for abnormalities. When the presence of a lesion has been verified by UvrB, the UvrA molecules dissociate. This Agrobacterium fabrum (strain C58 / ATCC 33970) (Agrobacterium tumefaciens (strain C58)) protein is UvrABC system protein A.